Consider the following 356-residue polypeptide: Histidinol-phosphate aminotransferase (356 aa).

At Lys214 the chain carries N6-(pyridoxal phosphate)lysine.

It belongs to the class-II pyridoxal-phosphate-dependent aminotransferase family. Histidinol-phosphate aminotransferase subfamily. Homodimer. Pyridoxal 5'-phosphate is required as a cofactor.

The catalysed reaction is L-histidinol phosphate + 2-oxoglutarate = 3-(imidazol-4-yl)-2-oxopropyl phosphate + L-glutamate. It participates in amino-acid biosynthesis; L-histidine biosynthesis; L-histidine from 5-phospho-alpha-D-ribose 1-diphosphate: step 7/9. The polypeptide is Histidinol-phosphate aminotransferase (Escherichia coli O7:K1 (strain IAI39 / ExPEC)).